Here is a 38-residue protein sequence, read N- to C-terminus: Photosystem II reaction center protein L (38 aa).

Residues 17 to 37 (SLYWGLLLIFVLAVLFSSYIF) form a helical membrane-spanning segment.

The protein belongs to the PsbL family. In terms of assembly, PSII is composed of 1 copy each of membrane proteins PsbA, PsbB, PsbC, PsbD, PsbE, PsbF, PsbH, PsbI, PsbJ, PsbK, PsbL, PsbM, PsbT, PsbX, PsbY, PsbZ, Psb30/Ycf12, at least 3 peripheral proteins of the oxygen-evolving complex and a large number of cofactors. It forms dimeric complexes.

Its subcellular location is the plastid. It localises to the chloroplast thylakoid membrane. Its function is as follows. One of the components of the core complex of photosystem II (PSII). PSII is a light-driven water:plastoquinone oxidoreductase that uses light energy to abstract electrons from H(2)O, generating O(2) and a proton gradient subsequently used for ATP formation. It consists of a core antenna complex that captures photons, and an electron transfer chain that converts photonic excitation into a charge separation. This subunit is found at the monomer-monomer interface and is required for correct PSII assembly and/or dimerization. This chain is Photosystem II reaction center protein L, found in Tupiella akineta (Green alga).